The sequence spans 377 residues: N5-carboxyaminoimidazole ribonucleotide synthase (377 aa).

Residues Arg-93, Lys-133, 138–144 (GYDGKGQ), 175–178 (EEFV), Glu-183, His-206, and 257–258 (NE) contribute to the ATP site. Positions 97 to 287 (KALLDRAQVA…QFENHLRAVC (191 aa)) constitute an ATP-grasp domain.

Belongs to the PurK/PurT family. In terms of assembly, homodimer.

The catalysed reaction is 5-amino-1-(5-phospho-beta-D-ribosyl)imidazole + hydrogencarbonate + ATP = 5-carboxyamino-1-(5-phospho-D-ribosyl)imidazole + ADP + phosphate + 2 H(+). The protein operates within purine metabolism; IMP biosynthesis via de novo pathway; 5-amino-1-(5-phospho-D-ribosyl)imidazole-4-carboxylate from 5-amino-1-(5-phospho-D-ribosyl)imidazole (N5-CAIR route): step 1/2. In terms of biological role, catalyzes the ATP-dependent conversion of 5-aminoimidazole ribonucleotide (AIR) and HCO(3)(-) to N5-carboxyaminoimidazole ribonucleotide (N5-CAIR). The sequence is that of N5-carboxyaminoimidazole ribonucleotide synthase from Vibrio cholerae serotype O1 (strain ATCC 39315 / El Tor Inaba N16961).